The sequence spans 150 residues: Large ribosomal subunit protein uL15 (150 aa).

Positions 1–57 (MTIKLESLQSNKGSRRKKMRKGRGIAAGQGASCGFGMRGQKSRSGRPTRPGFEGGQM) are disordered. Positions 13-23 (GSRRKKMRKGR) are enriched in basic residues. A compositionally biased stretch (gly residues) spans 25–37 (IAAGQGASCGFGM).

This sequence belongs to the universal ribosomal protein uL15 family. As to quaternary structure, part of the 50S ribosomal subunit.

In terms of biological role, binds to the 23S rRNA. This Prochlorococcus marinus (strain NATL1A) protein is Large ribosomal subunit protein uL15.